A 120-amino-acid polypeptide reads, in one-letter code: Glycine cleavage system H protein (120 aa).

Residues 17–99 (VATVGITTYA…QGAGWFFKLK (83 aa)) enclose the Lipoyl-binding domain. At Lys58 the chain carries N6-lipoyllysine.

The protein belongs to the GcvH family. In terms of assembly, the glycine cleavage system is composed of four proteins: P, T, L and H. The cofactor is (R)-lipoate.

In terms of biological role, the glycine cleavage system catalyzes the degradation of glycine. The H protein shuttles the methylamine group of glycine from the P protein to the T protein. In Rhizobium etli (strain CIAT 652), this protein is Glycine cleavage system H protein.